We begin with the raw amino-acid sequence, 463 residues long: Cytochrome P450 4d8 (463 aa).

Heme contacts are provided by Glu267 and Cys409.

This sequence belongs to the cytochrome P450 family. Heme serves as cofactor.

The protein localises to the endoplasmic reticulum membrane. It localises to the microsome membrane. Functionally, may be involved in the metabolism of insect hormones and in the breakdown of synthetic insecticides. In Drosophila melanogaster (Fruit fly), this protein is Cytochrome P450 4d8 (Cyp4d8).